A 161-amino-acid chain; its full sequence is Nucleotide-binding protein PFLU_4927 (161 aa).

It belongs to the YajQ family.

Functionally, nucleotide-binding protein. This is Nucleotide-binding protein PFLU_4927 from Pseudomonas fluorescens (strain SBW25).